A 357-amino-acid polypeptide reads, in one-letter code: Ribosomal RNA large subunit methyltransferase M (357 aa).

Residues Ser183, 216–219 (APGG), Asp235, Asp255, and Asp271 each bind S-adenosyl-L-methionine. Residue Lys300 is the Proton acceptor of the active site.

The protein belongs to the class I-like SAM-binding methyltransferase superfamily. RNA methyltransferase RlmE family. RlmM subfamily. In terms of assembly, monomer.

The protein localises to the cytoplasm. It catalyses the reaction cytidine(2498) in 23S rRNA + S-adenosyl-L-methionine = 2'-O-methylcytidine(2498) in 23S rRNA + S-adenosyl-L-homocysteine + H(+). Functionally, catalyzes the 2'-O-methylation at nucleotide C2498 in 23S rRNA. The polypeptide is Ribosomal RNA large subunit methyltransferase M (Pseudomonas syringae pv. tomato (strain ATCC BAA-871 / DC3000)).